A 194-amino-acid chain; its full sequence is MLVPTVIEQTARGERAYDIYSRLLKDRIIMLSGEINDQMANSIIAQLLFLDAQDNTKDISLYINSPGGVITSGLAIMDTMNFIKSDVSTIAIGMAASMASILLTSGTKGKRFALPNSTVLIHQPLGGAQGQQTDIQIAANEILKSRKKINEILHETTGQPLEKIQKDTERDNYLTAEEAKEYGLIDEIMANKKK.

The active-site Nucleophile is the S97. H122 is an active-site residue.

Belongs to the peptidase S14 family. Fourteen ClpP subunits assemble into 2 heptameric rings which stack back to back to give a disk-like structure with a central cavity, resembling the structure of eukaryotic proteasomes.

The protein resides in the cytoplasm. It carries out the reaction Hydrolysis of proteins to small peptides in the presence of ATP and magnesium. alpha-casein is the usual test substrate. In the absence of ATP, only oligopeptides shorter than five residues are hydrolyzed (such as succinyl-Leu-Tyr-|-NHMec, and Leu-Tyr-Leu-|-Tyr-Trp, in which cleavage of the -Tyr-|-Leu- and -Tyr-|-Trp bonds also occurs).. Functionally, cleaves peptides in various proteins in a process that requires ATP hydrolysis. Has a chymotrypsin-like activity. Plays a major role in the degradation of misfolded proteins. The sequence is that of ATP-dependent Clp protease proteolytic subunit from Lactobacillus helveticus (strain DPC 4571).